Here is a 324-residue protein sequence, read N- to C-terminus: CIMIP2 protein GA14893 (324 aa).

Belongs to the CIMIP2 family.

The protein localises to the cytoplasm. It localises to the cytoskeleton. The protein resides in the cilium axoneme. Probable microtubule inner protein (MIP) part of the dynein-decorated doublet microtubules (DMTs) in cilium axoneme. The chain is CIMIP2 protein GA14893 from Drosophila pseudoobscura pseudoobscura (Fruit fly).